The following is a 410-amino-acid chain: Phosphoglycerate kinase (410 aa).

Substrate is bound by residues D19 to N21, R34, H57 to K60, R114, and R154. Residues E332 and G358–S361 contribute to the ATP site.

This sequence belongs to the phosphoglycerate kinase family. As to quaternary structure, homodimer.

Its subcellular location is the cytoplasm. It carries out the reaction (2R)-3-phosphoglycerate + ATP = (2R)-3-phospho-glyceroyl phosphate + ADP. It participates in carbohydrate degradation; glycolysis; pyruvate from D-glyceraldehyde 3-phosphate: step 2/5. In Pyrococcus horikoshii (strain ATCC 700860 / DSM 12428 / JCM 9974 / NBRC 100139 / OT-3), this protein is Phosphoglycerate kinase (pgk).